Reading from the N-terminus, the 299-residue chain is Cysteine synthase B (299 aa).

The residue at position 45 (Lys45) is an N6-(pyridoxal phosphate)lysine. Residues Asn75, 178–182 (GTTGT), and Ser259 each bind pyridoxal 5'-phosphate.

It belongs to the cysteine synthase/cystathionine beta-synthase family. Requires pyridoxal 5'-phosphate as cofactor.

The enzyme catalyses O-acetyl-L-serine + hydrogen sulfide = L-cysteine + acetate. Its pathway is amino-acid biosynthesis; L-cysteine biosynthesis; L-cysteine from L-serine: step 2/2. The sequence is that of Cysteine synthase B (cysM) from Pseudomonas aeruginosa (strain ATCC 15692 / DSM 22644 / CIP 104116 / JCM 14847 / LMG 12228 / 1C / PRS 101 / PAO1).